We begin with the raw amino-acid sequence, 146 residues long: Villin-like protein ABP41 (146 aa).

The protein belongs to the villin/gelsolin family. Binds to actin. In terms of tissue distribution, expressed in pollen (at protein level).

It localises to the cytoplasm. The protein localises to the cytoskeleton. Functionally, ca(2+)-dependent actin filament-severing protein that is required for pollen tube growth. Probably regulates the dynamics of the actin cytoskeleton. It can promote the assembly of monomers into filaments (nucleation) as well as sever filaments already formed. In Lilium davidii (David's lily), this protein is Villin-like protein ABP41.